The chain runs to 133 residues: Protein FwdD (133 aa).

This chain is Protein FwdD (fwdD), found in Methanocaldococcus jannaschii (strain ATCC 43067 / DSM 2661 / JAL-1 / JCM 10045 / NBRC 100440) (Methanococcus jannaschii).